Here is a 72-residue protein sequence, read N- to C-terminus: DNA-directed RNA polymerase subunit omega (72 aa).

This sequence belongs to the RNA polymerase subunit omega family. In terms of assembly, the RNAP catalytic core consists of 2 alpha, 1 beta, 1 beta' and 1 omega subunit. When a sigma factor is associated with the core the holoenzyme is formed, which can initiate transcription.

The catalysed reaction is RNA(n) + a ribonucleoside 5'-triphosphate = RNA(n+1) + diphosphate. Promotes RNA polymerase assembly. Latches the N- and C-terminal regions of the beta' subunit thereby facilitating its interaction with the beta and alpha subunits. The chain is DNA-directed RNA polymerase subunit omega from Clostridium beijerinckii (strain ATCC 51743 / NCIMB 8052) (Clostridium acetobutylicum).